A 305-amino-acid chain; its full sequence is Homeobox protein NANOGP8 (305 aa).

Positions M1 to Q96 are disordered. Over residues S65–N82 the composition is skewed to polar residues. Residues K95–Q154 constitute a DNA-binding region (homeobox). A run of 8 repeats spans residues W196–T200, W201–T205, W206–T210, W216–S220, W221–T225, W226–S230, W231–A235, and W236–F240. The 8 X repeats starting with a Trp in each unit stretch occupies residues W196 to F240. Residues W196–F240 are sufficient for transactivation activity. Residues Y241–V305 form a sufficient for strong transactivation activity region.

It belongs to the Nanog homeobox family.

It is found in the nucleus. Functionally, may act as a transcription regulator. When overexpressed, promotes entry of cells into S phase and cell proliferation. This chain is Homeobox protein NANOGP8 (NANOGP8), found in Homo sapiens (Human).